A 264-amino-acid polypeptide reads, in one-letter code: 5'-nucleotidase SurE (264 aa).

Residues D10, D11, S43, and N99 each contribute to the a divalent metal cation site.

This sequence belongs to the SurE nucleotidase family. A divalent metal cation serves as cofactor.

The protein localises to the cytoplasm. The catalysed reaction is a ribonucleoside 5'-phosphate + H2O = a ribonucleoside + phosphate. Nucleotidase that shows phosphatase activity on nucleoside 5'-monophosphates. This is 5'-nucleotidase SurE from Methanococcus maripaludis (strain C6 / ATCC BAA-1332).